Reading from the N-terminus, the 131-residue chain is Ribonuclease VapC42 (131 aa).

The region spanning 1 to 125 (MIVDTSAIVA…FRGDDFTHTD (125 aa)) is the PINc domain. Mg(2+)-binding residues include D4 and D100.

This sequence belongs to the PINc/VapC protein family. The cofactor is Mg(2+).

Functionally, toxic component of a type II toxin-antitoxin (TA) system. An RNase. Its cognate antitoxin is VapB42. The sequence is that of Ribonuclease VapC42 from Mycobacterium tuberculosis (strain CDC 1551 / Oshkosh).